The sequence spans 306 residues: Bacitracin transport ATP-binding protein BcrA (306 aa).

The ABC transporter domain occupies 5 to 233 (IKTTDLTKMY…NRKYLEFQLS (229 aa)). 37 to 44 (GRNGAGKT) is a binding site for ATP.

Belongs to the ABC transporter superfamily.

Part of the binding-protein-dependent transport system for bacitracin that confer resistance to this antibiotic. Probably responsible for energy coupling to the transport system. The polypeptide is Bacitracin transport ATP-binding protein BcrA (bcrA) (Bacillus licheniformis).